A 376-amino-acid polypeptide reads, in one-letter code: MTQAQDHAKDHAMNIGVFIPIGNNGWLLSENAPQYMPSFELNKQITLKAEQHGLDFVLSMIKLRGFGGKTEFWDHNLESFTLMAGLAAVTSRIKLYATAPTLCLPPAIVARMASTIDSISNGRFGLNLVTGWQRPEYAQMGLWPGDEYFGRRYEYLSEYAQVLRELWETGRSDLKGEFFQMEDCRLSPRPQAEMKIICAGQSAAGMAFTATYADYNFCFGKGVNTPTAFAPTVERLEEAKAKTGRDVSSYVLFMVISDETDEAARAKWEHYKAGADAEAIAWLGLQGAADTKSGADTNIRQMADPTSAVNINMGTLVGSHATVAALLDEVVTVPGTGGVLLVFDDFLKGLDDFGTKIQPLMRSRRHVTGEALAEVA.

Residues 61 to 62 (IK), Asn-127, Glu-136, 152 to 153 (RY), and Ser-202 contribute to the FMN site.

It belongs to the NtaA/SnaA/DszA monooxygenase family. RutA subfamily.

The enzyme catalyses uracil + FMNH2 + NADH + O2 = (Z)-3-ureidoacrylate + FMN + NAD(+) + H2O + H(+). The catalysed reaction is thymine + FMNH2 + NADH + O2 = (Z)-2-methylureidoacrylate + FMN + NAD(+) + H2O + H(+). In terms of biological role, catalyzes the pyrimidine ring opening between N-3 and C-4 by an unusual flavin hydroperoxide-catalyzed mechanism, adding oxygen atoms in the process to yield ureidoacrylate peracid, that immediately reacts with FMN forming ureidoacrylate and FMN-N(5)-oxide. The FMN-N(5)-oxide reacts spontaneously with NADH to produce FMN. Requires the flavin reductase RutF to regenerate FMN in vivo. This chain is Pyrimidine monooxygenase RutA, found in Methylorubrum extorquens (strain CM4 / NCIMB 13688) (Methylobacterium extorquens).